A 604-amino-acid chain; its full sequence is Linalool synthase Tps-5073L4, chloroplastic (604 aa).

The N-terminal 36 residues, 1-36 (MSSMRIYVAIMKKPSVKHVDYVDKKASKPSWRVSSS), are a transit peptide targeting the chloroplast. Residues R323, D360, D364, R501, and D504 each contribute to the (2E)-geranyl diphosphate site. 2 residues coordinate Mg(2+): D360 and D364. The DDXXD motif signature appears at 360–364 (DDVYD). The Mg(2+) site is built by D504, T508, and E512.

Belongs to the terpene synthase family. Tpsb subfamily. In terms of assembly, monomer. The cofactor is Mg(2+). It depends on Mn(2+) as a cofactor.

The protein localises to the plastid. Its subcellular location is the chloroplast. It catalyses the reaction (2E)-geranyl diphosphate + H2O = linalool + diphosphate. The protein operates within secondary metabolite biosynthesis; terpenoid biosynthesis. In terms of biological role, monoterpene synthase (mono-TPS) involved in the biosynthesis of monoterpenes natural products. Catalyzes the conversion of (2E)-geranyl diphosphate (GPP) into linalool. This chain is Linalool synthase Tps-5073L4, chloroplastic, found in Perilla frutescens (Beefsteak mint).